Reading from the N-terminus, the 151-residue chain is Lectin-like protein BA14k (151 aa).

The N-terminal stretch at 1-26 (MNIFKQTCVGAFAVIFGATSIAPTMA) is a signal peptide. A helical transmembrane segment spans residues 83 to 103 (GWWYPLAAFGAGAIIGGAVSQ).

The protein belongs to the BA14k family.

The protein localises to the cell membrane. In terms of biological role, has immunoglobulin-binding and hemagglutination properties, and can bind to mannose. Essential for virulence. May be involved in LPS biosynthesis or polysaccharide transport. This Brucella anthropi (strain ATCC 49188 / DSM 6882 / CCUG 24695 / JCM 21032 / LMG 3331 / NBRC 15819 / NCTC 12168 / Alc 37) (Ochrobactrum anthropi) protein is Lectin-like protein BA14k.